The chain runs to 795 residues: Lon protease (795 aa).

The region spanning 7–213 (PQILVVRNQV…KIIGSGIEDL (207 aa)) is the Lon N-terminal domain. Position 379–386 (379–386 (GPPGVGKS)) interacts with ATP. Residues 615 to 795 (DALPGIVNGM…YKDIYNKIFN (181 aa)) enclose the Lon proteolytic domain. Residues serine 702 and lysine 745 contribute to the active site.

It belongs to the peptidase S16 family. Homohexamer. Organized in a ring with a central cavity.

The protein resides in the cytoplasm. It catalyses the reaction Hydrolysis of proteins in presence of ATP.. In terms of biological role, ATP-dependent serine protease that mediates the selective degradation of mutant and abnormal proteins as well as certain short-lived regulatory proteins. Required for cellular homeostasis and for survival from DNA damage and developmental changes induced by stress. Degrades polypeptides processively to yield small peptide fragments that are 5 to 10 amino acids long. Binds to DNA in a double-stranded, site-specific manner. This Mycoplasma pneumoniae (strain ATCC 29342 / M129 / Subtype 1) (Mycoplasmoides pneumoniae) protein is Lon protease.